A 465-amino-acid polypeptide reads, in one-letter code: Ribulose bisphosphate carboxylase large chain (465 aa).

Lysine 4 is modified (N6,N6,N6-trimethyllysine). Positions 113 and 163 each coordinate substrate. Catalysis depends on lysine 165, which acts as the Proton acceptor. Lysine 167 is a substrate binding site. Residues lysine 191, aspartate 193, and glutamate 194 each contribute to the Mg(2+) site. N6-carboxylysine is present on lysine 191. Catalysis depends on histidine 284, which acts as the Proton acceptor. Arginine 285, histidine 317, and serine 369 together coordinate substrate.

This sequence belongs to the RuBisCO large chain family. Type I subfamily. Heterohexadecamer of 8 large chains and 8 small chains; disulfide-linked. The disulfide link is formed within the large subunit homodimers. Mg(2+) serves as cofactor. Post-translationally, the disulfide bond which can form in the large chain dimeric partners within the hexadecamer appears to be associated with oxidative stress and protein turnover.

It localises to the plastid. Its subcellular location is the chloroplast. It catalyses the reaction 2 (2R)-3-phosphoglycerate + 2 H(+) = D-ribulose 1,5-bisphosphate + CO2 + H2O. It carries out the reaction D-ribulose 1,5-bisphosphate + O2 = 2-phosphoglycolate + (2R)-3-phosphoglycerate + 2 H(+). In terms of biological role, ruBisCO catalyzes two reactions: the carboxylation of D-ribulose 1,5-bisphosphate, the primary event in carbon dioxide fixation, as well as the oxidative fragmentation of the pentose substrate in the photorespiration process. Both reactions occur simultaneously and in competition at the same active site. The sequence is that of Ribulose bisphosphate carboxylase large chain from Cassia fistula (Golden shower tree).